The following is a 204-amino-acid chain: Ribosome maturation factor RimP (204 aa).

The interval 176-204 is disordered; that stretch reads GNFDESQFDEIEESEGEEADEAEQPPTKH. The segment covering 181–198 has biased composition (acidic residues); that stretch reads SQFDEIEESEGEEADEAE.

Belongs to the RimP family.

The protein localises to the cytoplasm. Its function is as follows. Required for maturation of 30S ribosomal subunits. The protein is Ribosome maturation factor RimP of Cereibacter sphaeroides (strain ATCC 17029 / ATH 2.4.9) (Rhodobacter sphaeroides).